The chain runs to 316 residues: MSDISKASLPKAIFLMGPTASGKTALAIELRKILPVELISVDSALIYKGMDIGTAKPNAEELLAVPHRLLDIRDPSQAYSAADFRRDALAEMADITAAGRIPLLVGGTMLYFKALLEGLSPLPSADPEVRARIEQQAAEQGWESLHRQLQEVDPVAAARIHPNDPQRLSRALEVFFISGKTLTELTQTSGDALPYQVHQFAIAPASRELLHQRIEQRFHQMLASGFEAEVRALFARGDLHTDLPSIRCVGYRQMWSYLEGEISYDEMVYRGVCATRQLAKRQITWLRGWEGVHWLDSEKPEQARDEVLQVVGAIAG.

17–24 (GPTASGKT) is a binding site for ATP. Position 19–24 (19–24 (TASGKT)) interacts with substrate. Interaction with substrate tRNA regions lie at residues 42–45 (DSAL), 166–170 (QRLSR), 247–252 (RCVGYR), and 280–287 (KRQITWLR).

It belongs to the IPP transferase family. In terms of assembly, monomer. Mg(2+) is required as a cofactor.

The enzyme catalyses adenosine(37) in tRNA + dimethylallyl diphosphate = N(6)-dimethylallyladenosine(37) in tRNA + diphosphate. In terms of biological role, catalyzes the transfer of a dimethylallyl group onto the adenine at position 37 in tRNAs that read codons beginning with uridine, leading to the formation of N6-(dimethylallyl)adenosine (i(6)A). The protein is tRNA dimethylallyltransferase of Shigella boydii serotype 18 (strain CDC 3083-94 / BS512).